A 30-amino-acid polypeptide reads, in one-letter code: Sperm protamine P5 (30 aa).

The interval Tyr1 to Gly30 is disordered.

As to expression, testis.

The protein localises to the nucleus. It is found in the chromosome. In terms of biological role, protamines substitute for histones in the chromatin of sperm during the haploid phase of spermatogenesis. They compact sperm DNA into a highly condensed, stable and inactive complex. The chain is Sperm protamine P5 from Octopus vulgaris (Common octopus).